The chain runs to 374 residues: Anhydro-N-acetylmuramic acid kinase (374 aa).

An ATP-binding site is contributed by Gly12–Asp19.

This sequence belongs to the anhydro-N-acetylmuramic acid kinase family.

The catalysed reaction is 1,6-anhydro-N-acetyl-beta-muramate + ATP + H2O = N-acetyl-D-muramate 6-phosphate + ADP + H(+). The protein operates within amino-sugar metabolism; 1,6-anhydro-N-acetylmuramate degradation. Its pathway is cell wall biogenesis; peptidoglycan recycling. In terms of biological role, catalyzes the specific phosphorylation of 1,6-anhydro-N-acetylmuramic acid (anhMurNAc) with the simultaneous cleavage of the 1,6-anhydro ring, generating MurNAc-6-P. Is required for the utilization of anhMurNAc either imported from the medium or derived from its own cell wall murein, and thus plays a role in cell wall recycling. This chain is Anhydro-N-acetylmuramic acid kinase, found in Escherichia fergusonii (strain ATCC 35469 / DSM 13698 / CCUG 18766 / IAM 14443 / JCM 21226 / LMG 7866 / NBRC 102419 / NCTC 12128 / CDC 0568-73).